The chain runs to 506 residues: Sodium-coupled neutral amino acid symporter 2 (506 aa).

The segment at 1–23 (MKKAEMGRFNISPDEDSSSYSSN) is disordered. Over 1-76 (MKKAEMGRFN…HPGTTSFGMS (76 aa)) the chain is Cytoplasmic. A regulates protein turnover upon amino acid deprivation region spans residues 1 to 96 (MKKAEMGRFN…SGILGLSYAM (96 aa)). 4 positions are modified to phosphoserine: serine 12, serine 21, serine 22, and serine 55. Residues 77–96 (VFNLSNAIVGSGILGLSYAM) traverse the membrane as a helical segment. Na(+) is bound at residue asparagine 82. At 97 to 102 (ANTGIA) the chain is on the extracellular side. A helical transmembrane segment spans residues 103–123 (LFIILLTFVSIFSLYSVHLLL). Residues 124 to 158 (KTANEGGSLLYEQLGYKAFGLVGKLAASGSITMQN) lie on the Cytoplasmic side of the membrane. A helical transmembrane segment spans residues 159 to 177 (IGAMSSYLFIVKYELPLVI). Over 178–188 (QALTNIEDKTG) the chain is Extracellular. The helical transmembrane segment at 189–209 (LWYLNGNYLVLLVSLVVILPL) threads the bilayer. The Cytoplasmic portion of the chain corresponds to 210-217 (SLFRNLGY). Residues 218–238 (LGYTSGLSLLCMVFFLIVVIC) traverse the membrane as a helical segment. Residues 239-292 (KKFQVPCPVEAALIINETINTTLTQPTALVPALSHNVTENDSCRPHYFIFNSQT) are Extracellular-facing. Cysteine 245 and cysteine 281 are disulfide-bonded. Residues asparagine 258 and asparagine 274 are each glycosylated (N-linked (GlcNAc...) asparagine). The chain crosses the membrane as a helical span at residues 293 to 313 (VYAVPILIFSFVCHPAVLPIY). At 314-329 (EELKDRSRRRMMNVSK) the chain is on the cytoplasmic side. The helical transmembrane segment at 330-350 (ISFFAMFLMYLLAALFGYLTF) threads the bilayer. Residues 351 to 371 (YEHVESELLHTYSSILGTDIL) lie on the Extracellular side of the membrane. A helical transmembrane segment spans residues 372–392 (LLIVRLAVLMAVTLTVPVVIF). Threonine 386 contacts Na(+). Residues 393–413 (PIRSSVTHLLCASKDFSWWRH) are Cytoplasmic-facing. Residues 414–434 (SLITVSILAFTNLLVIFVPTI) form a helical membrane-spanning segment. The Extracellular segment spans residues 435 to 436 (RD). The helical transmembrane segment at 437-457 (IFGFIGASAASMLIFILPSAF) threads the bilayer. Over 458 to 472 (YIKLVKKEPMKSVQK) the chain is Cytoplasmic. The chain crosses the membrane as a helical span at residues 473-495 (IGALFFLLSGVLVMTGSMALIVL). Over 496–506 (DWVHNAPGGGH) the chain is Extracellular.

Belongs to the amino acid/polyamine transporter 2 family. In terms of processing, polyubiquitination by NEDD4L regulates the degradation and the activity of SLC38A2.

It localises to the cell membrane. The enzyme catalyses L-alanine(in) + Na(+)(in) = L-alanine(out) + Na(+)(out). It catalyses the reaction glycine(in) + Na(+)(in) = glycine(out) + Na(+)(out). It carries out the reaction L-serine(in) + Na(+)(in) = L-serine(out) + Na(+)(out). The catalysed reaction is L-proline(in) + Na(+)(in) = L-proline(out) + Na(+)(out). The enzyme catalyses L-methionine(in) + Na(+)(in) = L-methionine(out) + Na(+)(out). It catalyses the reaction L-histidine(in) + Na(+)(in) = L-histidine(out) + Na(+)(out). It carries out the reaction L-asparagine(in) + Na(+)(in) = L-asparagine(out) + Na(+)(out). The catalysed reaction is L-glutamine(in) + Na(+)(in) = L-glutamine(out) + Na(+)(out). The enzyme catalyses L-threonine(in) + Na(+)(in) = L-threonine(out) + Na(+)(out). It catalyses the reaction L-leucine(in) + Na(+)(in) = L-leucine(out) + Na(+)(out). It carries out the reaction L-phenylalanine(in) + Na(+)(in) = L-phenylalanine(out) + Na(+)(out). Its activity is regulated as follows. Inhibited by N-methyl-D-glucamine. Inhibited by choline. Allosteric regulation of sodium ions binding by pH. Functionally, symporter that cotransports neutral amino acids and sodium ions from the extracellular to the intracellular side of the cell membrane. The transport is pH-sensitive, Li(+)-intolerant, electrogenic, driven by the Na(+) electrochemical gradient and cotransports of neutral amino acids and sodium ions with a stoichiometry of 1:1. May function in the transport of amino acids at the blood-brain barrier. May function in the transport of amino acids in the supply of maternal nutrients to the fetus through the placenta. Maintains a key metabolic glutamine/glutamate balance underpinning retrograde signaling by dendritic release of the neurotransmitter glutamate. Transports L-proline in differentiating osteoblasts for the efficient synthesis of proline-enriched proteins and provides proline essential for osteoblast differentiation and bone formation during bone development. In Pan paniscus (Pygmy chimpanzee), this protein is Sodium-coupled neutral amino acid symporter 2.